Here is a 394-residue protein sequence, read N- to C-terminus: 4-hydroxyphenylpyruvate dioxygenase (394 aa).

2 VOC domains span residues 18–149 (SFHH…LLEY) and 181–339 (FIDH…IFTK). Residues His-184, His-267, and Glu-350 each contribute to the Fe cation site.

It belongs to the 4HPPD family. In terms of assembly, homodimer. Fe cation is required as a cofactor.

The protein localises to the cytoplasm. Its subcellular location is the endoplasmic reticulum membrane. The protein resides in the golgi apparatus membrane. The catalysed reaction is 3-(4-hydroxyphenyl)pyruvate + O2 = homogentisate + CO2. Its pathway is amino-acid degradation; L-phenylalanine degradation; acetoacetate and fumarate from L-phenylalanine: step 3/6. Functionally, catalyzes the conversion of 4-hydroxyphenylpyruvic acid to homogentisic acid, one of the steps in tyrosine catabolism. The chain is 4-hydroxyphenylpyruvate dioxygenase (hpd) from Xenopus tropicalis (Western clawed frog).